A 660-amino-acid polypeptide reads, in one-letter code: tRNA 5-methylaminomethyl-2-thiouridine biosynthesis bifunctional protein MnmC (660 aa).

The interval 1-235 (MTITRHARID…KWEVLRGTFI (235 aa)) is tRNA (mnm(5)s(2)U34)-methyltransferase. Positions 266-660 (IGAGLAGCAT…LRGLIRGGGK (395 aa)) are FAD-dependent cmnm(5)s(2)U34 oxidoreductase.

This sequence in the N-terminal section; belongs to the methyltransferase superfamily. tRNA (mnm(5)s(2)U34)-methyltransferase family. It in the C-terminal section; belongs to the DAO family. Requires FAD as cofactor.

It localises to the cytoplasm. The catalysed reaction is 5-aminomethyl-2-thiouridine(34) in tRNA + S-adenosyl-L-methionine = 5-methylaminomethyl-2-thiouridine(34) in tRNA + S-adenosyl-L-homocysteine + H(+). Catalyzes the last two steps in the biosynthesis of 5-methylaminomethyl-2-thiouridine (mnm(5)s(2)U) at the wobble position (U34) in tRNA. Catalyzes the FAD-dependent demodification of cmnm(5)s(2)U34 to nm(5)s(2)U34, followed by the transfer of a methyl group from S-adenosyl-L-methionine to nm(5)s(2)U34, to form mnm(5)s(2)U34. The chain is tRNA 5-methylaminomethyl-2-thiouridine biosynthesis bifunctional protein MnmC from Pseudomonas savastanoi pv. phaseolicola (strain 1448A / Race 6) (Pseudomonas syringae pv. phaseolicola (strain 1448A / Race 6)).